Consider the following 287-residue polypeptide: Pyridoxal 5'-phosphate synthase subunit PdxS (287 aa).

Aspartate 21 lines the D-ribose 5-phosphate pocket. Residue lysine 78 is the Schiff-base intermediate with D-ribose 5-phosphate of the active site. D-ribose 5-phosphate is bound at residue glycine 150. Position 162 (arginine 162) interacts with D-glyceraldehyde 3-phosphate. Residues glycine 211 and 232 to 233 (GS) each bind D-ribose 5-phosphate.

It belongs to the PdxS/SNZ family. In terms of assembly, in the presence of PdxT, forms a dodecamer of heterodimers.

The catalysed reaction is aldehydo-D-ribose 5-phosphate + D-glyceraldehyde 3-phosphate + L-glutamine = pyridoxal 5'-phosphate + L-glutamate + phosphate + 3 H2O + H(+). It functions in the pathway cofactor biosynthesis; pyridoxal 5'-phosphate biosynthesis. Functionally, catalyzes the formation of pyridoxal 5'-phosphate from ribose 5-phosphate (RBP), glyceraldehyde 3-phosphate (G3P) and ammonia. The ammonia is provided by the PdxT subunit. Can also use ribulose 5-phosphate and dihydroxyacetone phosphate as substrates, resulting from enzyme-catalyzed isomerization of RBP and G3P, respectively. This Tropheryma whipplei (strain Twist) (Whipple's bacillus) protein is Pyridoxal 5'-phosphate synthase subunit PdxS.